An 87-amino-acid polypeptide reads, in one-letter code: Defensin-like protein 223 (87 aa).

Residues 1–34 (MKSTIFVLTLLIFVSLYFNIIVYVSFSFIGTSEI) form the signal peptide. Disulfide bonds link Cys-55–Cys-72, Cys-58–Cys-77, and Cys-62–Cys-79.

This sequence belongs to the DEFL family.

The protein localises to the secreted. This Arabidopsis thaliana (Mouse-ear cress) protein is Defensin-like protein 223.